The chain runs to 662 residues: Transketolase (662 aa).

His-28 is a substrate binding site. Residues His-68 and 115–117 (GPL) contribute to the thiamine diphosphate site. Residue Asp-156 participates in Mg(2+) binding. Residues Gly-157 and Asn-186 each coordinate thiamine diphosphate. Positions 186 and 188 each coordinate Mg(2+). Positions 261, 356, and 383 each coordinate substrate. His-261 serves as a coordination point for thiamine diphosphate. Residue Glu-410 is the Proton donor of the active site. Residue Phe-436 participates in thiamine diphosphate binding. Residues His-460, Asp-468, and Arg-519 each contribute to the substrate site.

This sequence belongs to the transketolase family. Homodimer. Mg(2+) serves as cofactor. Ca(2+) is required as a cofactor. The cofactor is Mn(2+). It depends on Co(2+) as a cofactor. Requires thiamine diphosphate as cofactor.

The enzyme catalyses D-sedoheptulose 7-phosphate + D-glyceraldehyde 3-phosphate = aldehydo-D-ribose 5-phosphate + D-xylulose 5-phosphate. It functions in the pathway carbohydrate biosynthesis; Calvin cycle. It participates in carbohydrate degradation; pentose phosphate pathway. Functionally, catalyzes the transfer of a two-carbon ketol group from a ketose donor to an aldose acceptor, via a covalent intermediate with the cofactor thiamine pyrophosphate. The chain is Transketolase (tkt) from Staphylococcus epidermidis (strain ATCC 12228 / FDA PCI 1200).